The sequence spans 528 residues: GTPase Der (528 aa).

2 stretches are compositionally biased toward acidic residues: residues 1–12 and 30–62; these read MDVEGAFADEEE and GYDD…PDFG. Positions 1–62 are disordered; that stretch reads MDVEGAFADE…EDDFAAPDFG (62 aa). EngA-type G domains are found at residues 90–253 and 263–436; these read CTVA…PEEP and RRVA…ENWD. GTP contacts are provided by residues 96–103, 143–147, 205–208, 269–276, 316–320, and 381–384; these read GRPNVGKS, DTGGW, NKFD, GKPNVGKS, DTAGL, and NKWD. The region spanning 437–519 is the KH-like domain; that stretch reads RRVSTGQLNN…PIRIAVRVRE (83 aa).

This sequence belongs to the TRAFAC class TrmE-Era-EngA-EngB-Septin-like GTPase superfamily. EngA (Der) GTPase family. In terms of assembly, associates with the 50S ribosomal subunit.

Its function is as follows. GTPase that plays an essential role in the late steps of ribosome biogenesis. The protein is GTPase Der of Corynebacterium efficiens (strain DSM 44549 / YS-314 / AJ 12310 / JCM 11189 / NBRC 100395).